The chain runs to 549 residues: Lipase 3 (549 aa).

Positions 1–15 are cleaved as a signal peptide; it reads MKLALALSLIASVAA. Cysteine 75 and cysteine 112 are joined by a disulfide. Serine 224 acts as the Acyl-ester intermediate in catalysis. Cysteine 283 and cysteine 292 are disulfide-bonded. N-linked (GlcNAc...) asparagine glycosylation is present at asparagine 329. Glutamate 356 functions as the Charge relay system in the catalytic mechanism. A glycan (N-linked (GlcNAc...) asparagine) is linked at asparagine 366. The Charge relay system role is filled by histidine 464.

The protein belongs to the type-B carboxylesterase/lipase family. As to quaternary structure, monomer and homodimer.

The catalysed reaction is a triacylglycerol + H2O = a diacylglycerol + a fatty acid + H(+). The sequence is that of Lipase 3 (LIP3) from Diutina rugosa (Yeast).